Reading from the N-terminus, the 291-residue chain is Bifunctional protein FolD (291 aa).

NADP(+)-binding positions include 168–170 (GRG), Thr-195, and Val-236.

Belongs to the tetrahydrofolate dehydrogenase/cyclohydrolase family. As to quaternary structure, homodimer.

It carries out the reaction (6R)-5,10-methylene-5,6,7,8-tetrahydrofolate + NADP(+) = (6R)-5,10-methenyltetrahydrofolate + NADPH. The catalysed reaction is (6R)-5,10-methenyltetrahydrofolate + H2O = (6R)-10-formyltetrahydrofolate + H(+). Its pathway is one-carbon metabolism; tetrahydrofolate interconversion. Its function is as follows. Catalyzes the oxidation of 5,10-methylenetetrahydrofolate to 5,10-methenyltetrahydrofolate and then the hydrolysis of 5,10-methenyltetrahydrofolate to 10-formyltetrahydrofolate. This chain is Bifunctional protein FolD, found in Bifidobacterium adolescentis (strain ATCC 15703 / DSM 20083 / NCTC 11814 / E194a).